The sequence spans 188 residues: dCTP deaminase (188 aa).

DCTP is bound by residues 111–116 (KSTYAR), 135–137 (TLE), glutamine 156, tyrosine 170, and glutamine 180. Glutamate 137 acts as the Proton donor/acceptor in catalysis.

It belongs to the dCTP deaminase family. In terms of assembly, homotrimer.

It carries out the reaction dCTP + H2O + H(+) = dUTP + NH4(+). The protein operates within pyrimidine metabolism; dUMP biosynthesis; dUMP from dCTP (dUTP route): step 1/2. Catalyzes the deamination of dCTP to dUTP. This Pseudomonas putida (strain W619) protein is dCTP deaminase.